A 544-amino-acid polypeptide reads, in one-letter code: Exodeoxyribonuclease 7 large subunit (544 aa).

Residues 522–544 are disordered; that stretch reads PETPPKSRKADNPPEPPEQTSFL.

Belongs to the XseA family. As to quaternary structure, heterooligomer composed of large and small subunits.

It is found in the cytoplasm. The enzyme catalyses Exonucleolytic cleavage in either 5'- to 3'- or 3'- to 5'-direction to yield nucleoside 5'-phosphates.. Its function is as follows. Bidirectionally degrades single-stranded DNA into large acid-insoluble oligonucleotides, which are then degraded further into small acid-soluble oligonucleotides. The polypeptide is Exodeoxyribonuclease 7 large subunit (Zymomonas mobilis subsp. mobilis (strain ATCC 31821 / ZM4 / CP4)).